We begin with the raw amino-acid sequence, 436 residues long: MEDTKKKKKKNINNNQDSKKKERHIVTWSQEEDVILREQITLHGTENWAIIASKFKDKSTRQCRRRWYTYLNSDFKRGGWSPEEDMLLCEAQRVFGNRWTEIAKVVSGRTDNAVKNRFTTLCKKRAKHEAMTKDSNSNTKRMLFLDGISTPRKSENETPIAKKLKRSHILDLTEISNYGRAEACVNQQIRSPFSVLARNATGIDSLEEQNQTSNVNESDGEGMFLKKDDPKVTALMQQAELLSSLAQKVNADNTEQSMENAWKVLQDFLNKGKENDLFRYGIPDIDFKIEEFKDLIEDLRSGYEDNQLSWRQPDLHDSPASSEYSSGSTIMVDQSGDKTQPFSADTQTEHKQVGEELLVPKNPDENMPISGEEKFSSPIQVTPLFRSLADGIPSPQFSESERSFLLKTLGIESSSPCPSANPSKPPPCKRVLLHSL.

The segment covering 1–11 (MEDTKKKKKKN) has biased composition (basic residues). Residues 1 to 23 (MEDTKKKKKKNINNNQDSKKKER) form a disordered region. A Nuclear localization signal 1 motif is present at residues 8 to 15 (KKKNINNN). HTH myb-type domains are found at residues 20-71 (KKER…YTYL) and 72-126 (NSDF…KKRA). 2 consecutive DNA-binding regions (H-T-H motif) follow at residues 48–71 (WAII…YTYL) and 99–122 (WTEI…TTLC). The Nuclear localization signal 2 signature appears at 151–158 (PRKSENET). The tract at residues 309-328 (SWRQPDLHDSPASSEYSSGS) is disordered. A compositionally biased stretch (polar residues) spans 319 to 328 (PASSEYSSGS).

Interacts with RBR1. Expressed in all shoot organs with higher levels in leaves, stems, flowers, siliques and floral buds. Also detected in roots tips.

The protein resides in the nucleus. Functionally, transcription factor that binds to DNA in promoters cis-regulatory element 5'-GGCGCGC-3' of cell cycle genes, including cyclins, cyclin-dependent kinases (CDKs), and components of the pre-replication complex. Binds to DNA in promoters cis-regulatory element 5'-AGCCG-3' of auxin regulated genes (e.g. PIN3 and PIN7). Together with FAMA and MYB88, ensures that stomata contain just two guard cells (GCs) by enforcing a single symmetric precursor cell division before stomatal maturity. Represses the expression of the mitosis-inducing factors CDKB1-1 and CDKA-1, specifically required for the last guard mother cells (GMC) symmetric divisions in the stomatal pathway. Represses CYCA2-3 in newly formed guard cells. Together with MYB88, regulates stomata spacing by restricting divisions late in the stomatal cell lineage thus limiting the number of GMC divisions. In collaboration with CDKB1-1 and CDKB1-2, restrict the G1/S transition and chloroplast and nuclear number during stomatal formation, and normally maintain fate and developmental progression throughout the stomatal cell lineage. Also involved in the shape regulation of pavement cells. Involved in sensing and/or transducing abiotic stress (e.g. drought and salt), probably via the positive regulation of NAC019. Regulates female reproduction being required for entry into megasporogenesis, probably via the regulation of cell cycle genes. Promotes histone H3K27me3 marks and represses stem cell gene expression. Required for lateral roots (LRs) initiation via the regulation of PIN3 expression in an auxin-dependent manner. Involved in responses to gravity stimulation in primary roots by regulating the transcription of PIN3 and PIN7 in gravity-sensing cells, thus modulating auxin asymmetric redistribution. The protein is Transcription factor MYB124 of Arabidopsis thaliana (Mouse-ear cress).